We begin with the raw amino-acid sequence, 361 residues long: Phospho-N-acetylmuramoyl-pentapeptide-transferase (361 aa).

Transmembrane regions (helical) follow at residues 18 to 38 (VFNYLTFRSIVSALTALILVL), 73 to 93 (TMGGVLIIVAIVISVLLWGDL), 97 to 117 (FIWVILLVTVAFSAIGWMDDY), 135 to 155 (LLQSIIGALAAVYLYFSATTG), 168 to 188 (VLPNLGLFYIVLAYFVIVGSS), 196 to 216 (GLDGLALMPTVMIGAALGVFA), 235 to 255 (GAGEVVVFCSALVGAGLGFLW), 263 to 283 (VFMGDVGSLGLGAALGVTAVV), 288 to 308 (LVYFLMGGIFVAETLSVILQV), and 338 to 358 (KVIVRFWIITFILVLCGLATL).

This sequence belongs to the glycosyltransferase 4 family. MraY subfamily. Mg(2+) serves as cofactor.

The protein localises to the cell inner membrane. The enzyme catalyses UDP-N-acetyl-alpha-D-muramoyl-L-alanyl-gamma-D-glutamyl-meso-2,6-diaminopimeloyl-D-alanyl-D-alanine + di-trans,octa-cis-undecaprenyl phosphate = di-trans,octa-cis-undecaprenyl diphospho-N-acetyl-alpha-D-muramoyl-L-alanyl-D-glutamyl-meso-2,6-diaminopimeloyl-D-alanyl-D-alanine + UMP. It participates in cell wall biogenesis; peptidoglycan biosynthesis. In terms of biological role, catalyzes the initial step of the lipid cycle reactions in the biosynthesis of the cell wall peptidoglycan: transfers peptidoglycan precursor phospho-MurNAc-pentapeptide from UDP-MurNAc-pentapeptide onto the lipid carrier undecaprenyl phosphate, yielding undecaprenyl-pyrophosphoryl-MurNAc-pentapeptide, known as lipid I. The sequence is that of Phospho-N-acetylmuramoyl-pentapeptide-transferase from Coxiella burnetii (strain CbuK_Q154) (Coxiella burnetii (strain Q154)).